The primary structure comprises 22 residues: Heat shock 70-related protein 1, mitochondrial (22 aa).

Belongs to the heat shock protein 70 family.

The protein resides in the mitochondrion. This chain is Heat shock 70-related protein 1, mitochondrial, found in Leishmania tarentolae (Sauroleishmania tarentolae).